The following is a 156-amino-acid chain: Small ribosomal subunit protein uS7 (156 aa).

The protein belongs to the universal ribosomal protein uS7 family. In terms of assembly, part of the 30S ribosomal subunit. Contacts proteins S9 and S11.

In terms of biological role, one of the primary rRNA binding proteins, it binds directly to 16S rRNA where it nucleates assembly of the head domain of the 30S subunit. Is located at the subunit interface close to the decoding center, probably blocks exit of the E-site tRNA. This chain is Small ribosomal subunit protein uS7, found in Desulfovibrio desulfuricans (strain ATCC 27774 / DSM 6949 / MB).